Reading from the N-terminus, the 316-residue chain is tRNA dimethylallyltransferase (316 aa).

Residue 13-20 (GPTASGKT) coordinates ATP. Residue 15–20 (TASGKT) coordinates substrate. 4 interaction with substrate tRNA regions span residues 38–41 (DSAL), 162–166 (QRINR), 243–248 (RCVGYR), and 276–283 (KRQITWLR).

The protein belongs to the IPP transferase family. Monomer. It depends on Mg(2+) as a cofactor.

It carries out the reaction adenosine(37) in tRNA + dimethylallyl diphosphate = N(6)-dimethylallyladenosine(37) in tRNA + diphosphate. Catalyzes the transfer of a dimethylallyl group onto the adenine at position 37 in tRNAs that read codons beginning with uridine, leading to the formation of N6-(dimethylallyl)adenosine (i(6)A). This chain is tRNA dimethylallyltransferase, found in Pasteurella multocida (strain Pm70).